A 316-amino-acid polypeptide reads, in one-letter code: HPr kinase/phosphorylase (316 aa).

Catalysis depends on residues H146 and K167. Residue 161–168 (GESGLGKS) coordinates ATP. S168 is a binding site for Mg(2+). The active-site Proton acceptor; for phosphorylation activity. Proton donor; for dephosphorylation activity is the D185. Positions 209–218 (LEVRGIGLLD) are important for the catalytic mechanism of both phosphorylation and dephosphorylation. A Mg(2+)-binding site is contributed by E210. Residue R252 is part of the active site. The interval 273–278 (QVEAGR) is important for the catalytic mechanism of dephosphorylation.

This sequence belongs to the HPrK/P family. As to quaternary structure, homohexamer. The cofactor is Mg(2+).

The enzyme catalyses [HPr protein]-L-serine + ATP = [HPr protein]-O-phospho-L-serine + ADP + H(+). It carries out the reaction [HPr protein]-O-phospho-L-serine + phosphate + H(+) = [HPr protein]-L-serine + diphosphate. Catalyzes the ATP- as well as the pyrophosphate-dependent phosphorylation of a specific serine residue in HPr, a phosphocarrier protein of the phosphoenolpyruvate-dependent sugar phosphotransferase system (PTS). HprK/P also catalyzes the pyrophosphate-producing, inorganic phosphate-dependent dephosphorylation (phosphorolysis) of seryl-phosphorylated HPr (P-Ser-HPr). The sequence is that of HPr kinase/phosphorylase from Polaromonas naphthalenivorans (strain CJ2).